The chain runs to 454 residues: DNA-binding protein (454 aa).

Positions 1 to 41 (MSHKKVVAISESSSDEEVPVAPPTAPPKKRQRKAVEEPRGH) are disordered. The residue at position 129 (Tyr129) is a Phosphotyrosine; by host. The Zn(2+) site is built by Cys213 and His215. The tract at residues 226-260 (VEMDVNSENAQRALKENPEKTKIVSNRWGRNVVQF) is flexible loop. 6 residues coordinate Zn(2+): Cys268, Cys284, Cys325, Cys327, Cys378, and Cys394. Residues 440–454 (TILPQGQHDDDLVLF) are C-terminal arm, DBP binding.

Belongs to the adenoviridae E2A DNA-binding protein family. As to quaternary structure, homomultimerizes on viral ssDNA bound to pTP. Forms a initiation complex with viral polymerase, pTP and hosts NFIA and POU2F1/OCT1. Interacts with host SRCAP.

The protein localises to the host nucleus. Functionally, plays a role in the elongation phase of viral strand displacement replication by unwinding the template in an ATP-independent fashion, employing its capacity to form multimers. Also enhances the rate of initiation. Released from template upon second strand synthesis. Assembles in complex with viral pTP, viral pol, host NFIA and host POU2F1/OCT1 on viral origin of replication. Covers the whole ssDNA genome during synthesis. The complementary strand synthesis induces its relese from DNA template. May inhibit cellular transcription mediated by the interaction between host SRCAP and CBP. In Canine adenovirus serotype 1 (strain CLL) (CAdV-1), this protein is DNA-binding protein.